A 1523-amino-acid chain; its full sequence is Dicer-like protein 1 (1523 aa).

Positions 24–38 are enriched in polar residues; the sequence is LNLSGERTISTTEPT. A disordered region spans residues 24-58; that stretch reads LNLSGERTISTTEPTEGNDSSSEESGDNEQISTQR. The 182-residue stretch at 123–304 folds into the Helicase ATP-binding domain; that stretch reads LFERAKSQNT…ESATKLEVLL (182 aa). Residue 136-143 coordinates ATP; sequence LDTGSGKT. A DEAH box motif is present at residues 249–252; the sequence is DEAH. A Helicase C-terminal domain is found at 444 to 617; that stretch reads LLRQKLIKYF…GIDSEIDSIL (174 aa). In terms of domain architecture, Dicer dsRNA-binding fold spans 640 to 730; it reads ALAILARYAS…NSVYHRRLPA (91 aa). A PAZ domain is found at 879–1007; sequence ELLHLVHENE…VCIEPLRISA (129 aa). RNase III domains follow at residues 1031–1190 and 1241–1392; these read IALE…LSGG and GRKV…VDSD. 3 residues coordinate Mg(2+): Glu-1281, Asp-1378, and Glu-1381. The DRBM domain maps to 1426-1494; sequence TFLQNRLTNE…SEKALSVLEN (69 aa). Residues Cys-1438, His-1465, Cys-1506, and Cys-1508 each coordinate Zn(2+).

It belongs to the helicase family. Dicer subfamily. Mg(2+) is required as a cofactor. It depends on Mn(2+) as a cofactor.

Functionally, dicer-like endonuclease involved in cleaving double-stranded RNA in the RNA interference (RNAi) pathway. Produces 21 to 25 bp dsRNAs (siRNAs) which target the selective destruction of homologous RNAs leading to sequence-specific suppression of gene expression, called post-transcriptional gene silencing (PTGS). Part of a broad host defense response against viral infection and transposons. This chain is Dicer-like protein 1 (dcl1), found in Aspergillus oryzae (strain ATCC 42149 / RIB 40) (Yellow koji mold).